The sequence spans 356 residues: D-alanine--D-alanine ligase (356 aa).

An ATP-grasp domain is found at 134–339; sequence KQLFEHRGLP…YPELITKLIE (206 aa). 167–222 provides a ligand contact to ATP; it reads NDKLNYPVFVKPANLGSSVGISKCNNEAELKEGIKEAFQFDRKLVIEQGVNAREIE. Mg(2+) is bound by residues aspartate 293, glutamate 306, and asparagine 308.

This sequence belongs to the D-alanine--D-alanine ligase family. The cofactor is Mg(2+). Mn(2+) serves as cofactor.

It localises to the cytoplasm. The enzyme catalyses 2 D-alanine + ATP = D-alanyl-D-alanine + ADP + phosphate + H(+). Its pathway is cell wall biogenesis; peptidoglycan biosynthesis. Cell wall formation. This is D-alanine--D-alanine ligase from Staphylococcus aureus (strain MSSA476).